A 55-amino-acid polypeptide reads, in one-letter code: ATP synthase protein 8 (55 aa).

A helical membrane pass occupies residues 7–24; that stretch reads NPWLFIMLMSWLTFSLII. A disordered region spans residues 35-55; sequence NPPSNKTPTTTKTSPWTWPWT. Low complexity predominate over residues 37 to 55; that stretch reads PSNKTPTTTKTSPWTWPWT.

Belongs to the ATPase protein 8 family. As to quaternary structure, F-type ATPases have 2 components, CF(1) - the catalytic core - and CF(0) - the membrane proton channel.

Its subcellular location is the mitochondrion membrane. Functionally, mitochondrial membrane ATP synthase (F(1)F(0) ATP synthase or Complex V) produces ATP from ADP in the presence of a proton gradient across the membrane which is generated by electron transport complexes of the respiratory chain. F-type ATPases consist of two structural domains, F(1) - containing the extramembraneous catalytic core and F(0) - containing the membrane proton channel, linked together by a central stalk and a peripheral stalk. During catalysis, ATP synthesis in the catalytic domain of F(1) is coupled via a rotary mechanism of the central stalk subunits to proton translocation. Part of the complex F(0) domain. Minor subunit located with subunit a in the membrane. In Corythaeola cristata (Great blue turaco), this protein is ATP synthase protein 8 (MT-ATP8).